We begin with the raw amino-acid sequence, 1892 residues long: Plexin A3 (1892 aa).

Residues M1 to A20 form the signal peptide. In terms of domain architecture, Sema spans F21 to V509. The Extracellular portion of the chain corresponds to F21–P1240. A glycan (N-linked (GlcNAc...) asparagine) is linked at N68. 9 disulfides stabilise this stretch: C86/C95, C121/C129, C283/C404, C299/C355, C373/C392, C512/C529, C518/C560, C521/C538, and C532/C544. Residue N569 is glycosylated (N-linked (GlcNAc...) asparagine). A disulfide bridge links C595 with C615. 4 IPT/TIG domains span residues P861–V955, P957–T1041, P1044–Y1143, and P1146–Y1232. Residue N1183 is glycosylated (N-linked (GlcNAc...) asparagine). A helical transmembrane segment spans residues A1241–I1261. Residues A1262–I1315 adopt a coiled-coil conformation. Topologically, residues A1262 to S1892 are cytoplasmic.

Belongs to the plexin family. Detected in primary motor neurons in the embryonic nervous system.

It is found in the cell membrane. Functionally, coreceptor for class 3 semaphorins. Necessary for signaling by class 3 semaphorins and subsequent remodeling of the cytoskeleton. Plays a role in axon guidance in the developing nervous system. Class 3 semaphorins bind to a complex composed of a neuropilin and a plexin. The plexin modulates the affinity of the complex for specific semaphorins, and its cytoplasmic domain is required for the activation of down-stream signaling events in the cytoplasm. In Danio rerio (Zebrafish), this protein is Plexin A3 (plxna3).